The following is a 498-amino-acid chain: O-methyltransferase OME1 (498 aa).

Residues 1-19 (MSTMALHRTASTKSDTTMA) are compositionally biased toward polar residues. Disordered regions lie at residues 1-23 (MSTMALHRTASTKSDTTMACPNG) and 42-83 (HRAE…QPEY). The span at 50–65 (SSTSSVSTTPTSPSFS) shows a compositional bias: low complexity. Residue Asp-358 participates in S-adenosyl-L-methionine binding. His-406 functions as the Proton acceptor in the catalytic mechanism.

This sequence belongs to the class I-like SAM-binding methyltransferase superfamily. Cation-independent O-methyltransferase family.

Its pathway is secondary metabolite biosynthesis. In terms of biological role, O-methyltransferase; part of the gene cluster that mediates the biosynthesis of a tyrosine-derived cytochalasan acting as a fungal signal recognized by resistant rice plants and leads to avirulence in Pi33 resistant rice cultivars. The first step in the pathway is catalyzed by the hybrid PKS-NRPS ACE1, assisted by the enoyl reductase RAP1, that are responsible for fusion of the tyrosine precursor and the polyketide backbone. The polyketide synthase module (PKS) of ACE1 is responsible for the synthesis of the polyketide backbone and the downstream nonribosomal peptide synthetase (NRPS) amidates the carboxyl end of the polyketide with the tyrosine precursor. Because ACE1 lacks a designated enoylreductase (ER) domain, the required activity is provided the enoyl reductase RAP1. Reduction by the hydrolyase ORFZ, followed by dehydration and intra-molecular Diels-Alder cyclization by the Diels-Alderase ORF3 then yield the required isoindolone-fused macrocycle. A number of oxidative steps catalyzed by the tailoring enzymes identified within the cluster, including cytochrome P450 monooxygenases CYP1 to CYP4, the FAD-linked oxidoreductase OXR2 and the short-chain dehydrogenase/reductase OXR1, are further required to afford the final cytochalasans that confer avirulence and which have still to be identified. The monooxygenase CYP1 has been shown to be a site-selective C-18 hydroxylase whereas the function of CYP3 is the site-selective epoxidation of the C-6/C-7 olefin that is present in some intermediate compounds. Finally, SYN2 and RAP2 are not required for avirulence in Pi33 resistant rice cultivars. The protein is O-methyltransferase OME1 of Pyricularia oryzae (strain 70-15 / ATCC MYA-4617 / FGSC 8958) (Rice blast fungus).